Consider the following 480-residue polypeptide: Cytochrome P450 724B1 (480 aa).

The chain crosses the membrane as a helical span at residues 6–26 (LVLAALVILLALLLTLVLSHF). Cys-426 is a heme binding site.

It belongs to the cytochrome P450 family. The cofactor is heme. Ubiquitously expressed at low levels, but preferentially in the internodes and the florets before flowering.

The protein resides in the membrane. It catalyses the reaction campesterol + reduced [NADPH--hemoprotein reductase] + O2 = (22S)-22-hydroxycampesterol + oxidized [NADPH--hemoprotein reductase] + H2O + H(+). The protein operates within plant hormone biosynthesis; brassinosteroid biosynthesis. Involved in brassinosteroid biosynthesis. May catalyze a C6-oxidation step and may be involved to supply 6-deoxotyphasterol and typhasterol. Involved in internode elongation and seed development. Catalyzes the conversion of campesterol (CR) to (22S)-22-hydroxycampesterol (22-OHCR, 22-hydroxyCR). The chain is Cytochrome P450 724B1 from Oryza sativa subsp. japonica (Rice).